Consider the following 180-residue polypeptide: uncharacterized protein (180 aa).

A signal peptide spans 1–21; that stretch reads MKQCIAFMAILALSLSAISEA. The interval 23 to 81 is disordered; it reads GGRGVRSSGYSRPVATKPAPAPKQTQTQQQSQQPDATFGQQNMQNTATNTPNNPNNRLA. Over residues 27 to 78 the composition is skewed to low complexity; that stretch reads VRSSGYSRPVATKPAPAPKQTQTQQQSQQPDATFGQQNMQNTATNTPNNPNN.

This is an uncharacterized protein from Pasteurella multocida (strain Pm70).